The following is a 406-amino-acid chain: Argininosuccinate synthase (406 aa).

8 to 16 (AYSGGLDTS) contributes to the ATP binding site. Tyr86 serves as a coordination point for L-citrulline. Gly116 is a binding site for ATP. Residues Thr118, Asn122, and Asp123 each coordinate L-aspartate. Asn122 provides a ligand contact to L-citrulline. L-citrulline-binding residues include Arg126, Ser174, Ser183, Glu259, and Tyr271.

This sequence belongs to the argininosuccinate synthase family. Type 1 subfamily. Homotetramer.

Its subcellular location is the cytoplasm. The enzyme catalyses L-citrulline + L-aspartate + ATP = 2-(N(omega)-L-arginino)succinate + AMP + diphosphate + H(+). The protein operates within amino-acid biosynthesis; L-arginine biosynthesis; L-arginine from L-ornithine and carbamoyl phosphate: step 2/3. The sequence is that of Argininosuccinate synthase from Oenococcus oeni (strain ATCC BAA-331 / PSU-1).